The chain runs to 276 residues: Caspase-6 (276 aa).

Residues 1–5 (MTETD) constitute a propeptide that is removed on maturation. The tri-arginine exosite stretch occupies residues 25 to 27 (KRR). Residue serine 62 is modified to Phosphoserine. Residue histidine 104 is part of the active site. The 130's region stretch occupies residues 108–125 (NHVYAYDAKIEIQTLTGL). Residue cysteine 146 is part of the active site. Residues 163–175 (HQTDKLDNVTQVD) constitute a propeptide that is removed on maturation. Phosphoserine is present on serine 239. 2 S-palmitoyl cysteine lipidation sites follow: cysteine 246 and cysteine 259.

This sequence belongs to the peptidase C14A family. As to quaternary structure, heterotetramer that consists of two anti-parallel arranged heterodimers, each one formed by a 18 kDa (p18) and a 11 kDa (p11) subunit. Interacts with BIRC6/bruce. Interacts with RIPK3. In terms of assembly, heterotetramer that consists of two anti-parallel arranged heterodimers, each one formed by a 18 kDa (Caspase-6 subunit p18) and a 11 kDa (Caspase-6 subunit p11) subunit. Post-translationally, phosphorylated by NUAK1; phosphorylation inhibits self-activation. Phosphorylation at Ser-239 by AMP-activated protein kinase (PRKAA1 or PRKAA2) inhibits autocleavage, preventing caspase activation, thereby preventing hepatocyte apoptosis. Palmitoylation by ZDHHC17 blocks dimerization and subsequent activation, leading to inhibit the cysteine protease activity. In terms of processing, can be cleaved and activated by different caspases, depending on the context. Cleaved and activated by caspase-8 (CASP8) and subsequently by caspase-3 (CASP3). Can also undergo autoactivation by mediating autocleavage at Asp-162 and Asp-175, while it is not able to cleave its N-terminal disordered prodomain. Cleaved and activated by CASP1, possibly in the context of inflammation. As to expression, highly expressed in lung, liver, kidney, testis, and heart. Lower levels in spleen, skeletal muscle and brain. Expressed in neurons.

The protein localises to the cytoplasm. Its subcellular location is the nucleus. It catalyses the reaction Strict requirement for Asp at position P1 and has a preferred cleavage sequence of Val-Glu-His-Asp-|-.. With respect to regulation, during activation, the N-terminal disordered prodomain is removed by cleavage. Concomitantly, double cleavage gives rise to a large 18-kDa and a small 11-kDa subunit. The two large and two small subunits then assemble to form the active CASP6 complex. Can be cleaved and activated by different caspases, depending on the context. Cleaved and activated by caspase-8 (CASP8) and subsequently by caspase-3 (CASP3). Can also undergo autoactivation by mediating autocleavage at Asp-162 and Asp-175, while it is not able to cleave its N-terminal disordered prodomain. Intramolecular cleavage at Asp-175 is a prerequisite for CASP6 self-activation. Cleaved and activated by CASP1 in neurons, possibly in the context of inflammation. Phosphorylation at Ser-239 inhibits autocleavage, preventing caspase activation. Functionally, cysteine protease that plays essential roles in programmed cell death, axonal degeneration, development and innate immunity. Acts as a non-canonical executioner caspase during apoptosis: localizes in the nucleus and cleaves the nuclear structural protein NUMA1 and lamin A/LMNA thereby inducing nuclear shrinkage and fragmentation. Lamin-A/LMNA cleavage is required for chromatin condensation and nuclear disassembly during apoptotic execution. Acts as a regulator of liver damage by promoting hepatocyte apoptosis: in absence of phosphorylation by AMP-activated protein kinase (AMPK), catalyzes cleavage of BID, leading to cytochrome c release, thereby participating in nonalcoholic steatohepatitis. Cleaves PARK7/DJ-1 in cells undergoing apoptosis. Involved in intrinsic apoptosis by mediating cleavage of RIPK1. Furthermore, cleaves many transcription factors such as NF-kappa-B and cAMP response element-binding protein/CREBBP. Cleaves phospholipid scramblase proteins XKR4 and XKR9. In addition to apoptosis, involved in different forms of programmed cell death. Plays an essential role in defense against viruses by acting as a central mediator of the ZBP1-mediated pyroptosis, apoptosis, and necroptosis (PANoptosis), independently of its cysteine protease activity. PANoptosis is a unique inflammatory programmed cell death, which provides a molecular scaffold that allows the interactions and activation of machinery required for inflammasome/pyroptosis, apoptosis and necroptosis. Mechanistically, interacts with RIPK3 and enhances the interaction between RIPK3 and ZBP1, leading to ZBP1-mediated inflammasome activation and cell death. Plays an essential role in axon degeneration during axon pruning which is the remodeling of axons during neurogenesis but not apoptosis. Regulates B-cell programs both during early development and after antigen stimulation. In terms of biological role, (Microbial infection) Proteolytically cleaves the N protein of coronaviruses. The cleavage leads to two fragments and modulates coronavirus replication by regulating IFN signaling. The two fragments produced by the cleavage interact with IRF3 inhibiting its nuclear translocation after activation and reduce the expression of IFNB and IFN-stimulated genes. This Mus musculus (Mouse) protein is Caspase-6.